The following is a 491-amino-acid chain: UDP-N-acetylmuramoyl-L-alanyl-D-glutamate--2,6-diaminopimelate ligase (491 aa).

Residue Ser30 coordinates UDP-N-acetyl-alpha-D-muramoyl-L-alanyl-D-glutamate. 108–114 serves as a coordination point for ATP; it reads GTNGKTT. Residues Asn149, 150–151, Ser177, and Arg185 contribute to the UDP-N-acetyl-alpha-D-muramoyl-L-alanyl-D-glutamate site; that span reads TT. Lys217 is subject to N6-carboxylysine. Meso-2,6-diaminopimelate-binding positions include Arg383, 407 to 410, Gly457, and Glu461; that span reads DNPR. A Meso-diaminopimelate recognition motif motif is present at residues 407–410; that stretch reads DNPR.

The protein belongs to the MurCDEF family. MurE subfamily. It depends on Mg(2+) as a cofactor. In terms of processing, carboxylation is probably crucial for Mg(2+) binding and, consequently, for the gamma-phosphate positioning of ATP.

The protein resides in the cytoplasm. It catalyses the reaction UDP-N-acetyl-alpha-D-muramoyl-L-alanyl-D-glutamate + meso-2,6-diaminopimelate + ATP = UDP-N-acetyl-alpha-D-muramoyl-L-alanyl-gamma-D-glutamyl-meso-2,6-diaminopimelate + ADP + phosphate + H(+). Its pathway is cell wall biogenesis; peptidoglycan biosynthesis. In terms of biological role, catalyzes the addition of meso-diaminopimelic acid to the nucleotide precursor UDP-N-acetylmuramoyl-L-alanyl-D-glutamate (UMAG) in the biosynthesis of bacterial cell-wall peptidoglycan. This Bacillus cereus (strain ATCC 14579 / DSM 31 / CCUG 7414 / JCM 2152 / NBRC 15305 / NCIMB 9373 / NCTC 2599 / NRRL B-3711) protein is UDP-N-acetylmuramoyl-L-alanyl-D-glutamate--2,6-diaminopimelate ligase.